The primary structure comprises 685 residues: Probable cysteine desulfurase (685 aa).

Residues 1 to 282 (MTRSPCSTTS…RDEHEVFDVA (282 aa)) form a cargo-loading domain region. Disordered regions lie at residues 48–135 (SIRP…TSAG) and 162–185 (PTPA…VPDT). The segment covering 71 to 85 (ATAATSAGRTAAGTA) has biased composition (low complexity). The segment covering 102 to 121 (LPPPASPAPEAPPQAAPPAP) has biased composition (pro residues). The span at 122–135 (RGSAPDATAATSAG) shows a compositional bias: low complexity. Positions 164 to 178 (PAGPEAPPQSAPPAP) are enriched in pro residues. The residue at position 502 (Lys502) is an N6-(pyridoxal phosphate)lysine. The active-site Cysteine persulfide intermediate is Cys640.

This sequence belongs to the class-V pyridoxal-phosphate-dependent aminotransferase family. Csd subfamily. As to quaternary structure, isolated from bacteria in a complex with encapsulin 2A (AC I3NID5), strongly suggesting it is found in a type 2A encapsulin nanocompartment. There are 1-2 copies of this protein in each encapsulin shell. It depends on pyridoxal 5'-phosphate as a cofactor.

The protein localises to the encapsulin nanocompartment. Its subcellular location is the cell membrane. It catalyses the reaction (sulfur carrier)-H + L-cysteine = (sulfur carrier)-SH + L-alanine. Functionally, cargo protein of a type 2A encapsulin nanocompartment involved in sulfur metabolism. Cysteine desulfurases mobilize the sulfur from L-cysteine to yield L-alanine, an essential step in sulfur metabolism for biosynthesis of a variety of sulfur-containing biomolecules. This is Probable cysteine desulfurase from Mycolicibacterium paratuberculosis (strain ATCC BAA-968 / K-10) (Mycobacterium paratuberculosis).